Here is a 370-residue protein sequence, read N- to C-terminus: Ubiquitin carboxyl-terminal hydrolase 12 (370 aa).

A Required for plasma membrane localization of USP12/WDR20 motif is present at residues 1 to 4; sequence MEIL. The USP domain occupies 39 to 369; sequence FGLVNFGNTC…SGYILFYQSR (331 aa). Cys-48 functions as the Nucleophile in the catalytic mechanism. The span at 146-157 shows a compositional bias: basic and acidic residues; it reads QEKQNGRLRNGD. The interval 146–168 is disordered; sequence QEKQNGRLRNGDVDSEDNNSTPD. Zn(2+) is bound by residues Cys-186, Cys-189, Cys-233, and Cys-236. The active-site Proton acceptor is His-317.

It belongs to the peptidase C19 family. USP12/USP46 subfamily. Interacts with WDR48. Interacts with WDR20; this interaction promotes translocation of the USP12 complex to the plasma membrane. Component of the USP12-WDR20-WDR48 deubiquitinating complex. Component of the USP12-DMWD-WDR48 deubiquitinating complex. Interacts with PHLPP1. Interacts with RBPJ. Interacts with CBP; this interaction blocks the acetyltransferase activity of CREBBP. Interacts with ITCH; the interaction is more efficient when both USP12 and WDR48/UAF1 are involved and may mediate recruitment of the USP12 deubiquitinating complex to Notch.

It localises to the nucleus. Its subcellular location is the cytoplasm. The protein localises to the cell membrane. It catalyses the reaction Thiol-dependent hydrolysis of ester, thioester, amide, peptide and isopeptide bonds formed by the C-terminal Gly of ubiquitin (a 76-residue protein attached to proteins as an intracellular targeting signal).. Activated by interaction with WDR20, WDR48 and DMWD through different allosteric mechanisms. In terms of biological role, deubiquitinating enzyme that plays various roles in the regulation of the immune response and inflammation. During TCR engagement and activation, translocates into the cytoplasm and deubiquitinates its substrates LAT and TRAT1 and prevents their lysosome-dependent degradation to stabilize the TCR signaling complex at the plasma membrane. Plays an essential role in the selective LPS-induced macrophage response through the activation of NF-kappa-B pathway. In addition, promotes that antiviral immune response through targeting DNA sensor IFI16 to inhibit its proteasome-dependent degradation. Participates in the interferon signaling pathway and antiviral response independently of its deubiquitinase activity by maintaining nuclear phosphorylated STAT1 levels via inhibition of its CREBBP-mediated acetylation and subsequent dephosphorylation. Plays an intrinsic role in promoting the differentiation, activation and proliferation of CD4(+) T-cell by activating the NF-kappa-B signaling pathway through deubiquitinating and stabilizing B-cell lymphoma/leukemia 10/BCL10. In myeloid-derived suppressor cells promotes the activation of the NF-kappa-B via deubiquitination and stabilization of RELA. Regulates the 'Lys-63'-linked polyubiquitin chains of BAX and thereby modulates the mitochondrial apoptotic process. Negative regulator of NOTCH signaling that specifically deubiquitinates non-activated NOTCH receptors to target them for lysosomal degradation; deubiquitination of NOTCH stimulates its transport form late endosomes to lysosomes. Protects neurons against HTT/huntingtin-induced polyglutamine expansion-dependent neurodegeneration through regulation of autophagic flux. This function is independent of deubiquitinase activity or of other components of the USP12-WDR20-WDR48 deubiquitinating complex. In complex with WDR48, acts as a potential tumor suppressor by positively regulating PHLPP1 stability. This Rattus norvegicus (Rat) protein is Ubiquitin carboxyl-terminal hydrolase 12.